A 202-amino-acid chain; its full sequence is Molybdenum cofactor guanylyltransferase (202 aa).

GTP contacts are provided by residues 9-11 (LAG), Lys-22, Asp-70, and Asp-96. Asp-96 is a binding site for Mg(2+).

Belongs to the MobA family. Monomer. Mg(2+) serves as cofactor.

The protein resides in the cytoplasm. It catalyses the reaction Mo-molybdopterin + GTP + H(+) = Mo-molybdopterin guanine dinucleotide + diphosphate. In terms of biological role, transfers a GMP moiety from GTP to Mo-molybdopterin (Mo-MPT) cofactor (Moco or molybdenum cofactor) to form Mo-molybdopterin guanine dinucleotide (Mo-MGD) cofactor. In Desulfosudis oleivorans (strain DSM 6200 / JCM 39069 / Hxd3) (Desulfococcus oleovorans), this protein is Molybdenum cofactor guanylyltransferase.